The sequence spans 420 residues: Serine hydroxymethyltransferase (420 aa).

Residues Leu121 and 125-127 (GHL) each bind (6S)-5,6,7,8-tetrahydrofolate. Lys230 carries the N6-(pyridoxal phosphate)lysine modification. Residues Glu246 and 354–356 (SPF) contribute to the (6S)-5,6,7,8-tetrahydrofolate site.

Belongs to the SHMT family. As to quaternary structure, homodimer. Pyridoxal 5'-phosphate serves as cofactor.

It localises to the cytoplasm. The catalysed reaction is (6R)-5,10-methylene-5,6,7,8-tetrahydrofolate + glycine + H2O = (6S)-5,6,7,8-tetrahydrofolate + L-serine. It functions in the pathway one-carbon metabolism; tetrahydrofolate interconversion. Its pathway is amino-acid biosynthesis; glycine biosynthesis; glycine from L-serine: step 1/1. Its function is as follows. Catalyzes the reversible interconversion of serine and glycine with tetrahydrofolate (THF) serving as the one-carbon carrier. This reaction serves as the major source of one-carbon groups required for the biosynthesis of purines, thymidylate, methionine, and other important biomolecules. Also exhibits THF-independent aldolase activity toward beta-hydroxyamino acids, producing glycine and aldehydes, via a retro-aldol mechanism. In Rickettsia peacockii (strain Rustic), this protein is Serine hydroxymethyltransferase.